Reading from the N-terminus, the 314-residue chain is 4-hydroxy-3-methylbut-2-enyl diphosphate reductase (314 aa).

C12 is a binding site for [4Fe-4S] cluster. (2E)-4-hydroxy-3-methylbut-2-enyl diphosphate is bound by residues H41 and H74. Residues H41 and H74 each coordinate dimethylallyl diphosphate. Isopentenyl diphosphate-binding residues include H41 and H74. C96 contacts [4Fe-4S] cluster. H124 serves as a coordination point for (2E)-4-hydroxy-3-methylbut-2-enyl diphosphate. Position 124 (H124) interacts with dimethylallyl diphosphate. H124 serves as a coordination point for isopentenyl diphosphate. E126 (proton donor) is an active-site residue. T167 contributes to the (2E)-4-hydroxy-3-methylbut-2-enyl diphosphate binding site. C197 contacts [4Fe-4S] cluster. Residues S225, S226, N227, and S269 each contribute to the (2E)-4-hydroxy-3-methylbut-2-enyl diphosphate site. The dimethylallyl diphosphate site is built by S225, S226, N227, and S269. S225, S226, N227, and S269 together coordinate isopentenyl diphosphate.

This sequence belongs to the IspH family. Requires [4Fe-4S] cluster as cofactor.

It catalyses the reaction isopentenyl diphosphate + 2 oxidized [2Fe-2S]-[ferredoxin] + H2O = (2E)-4-hydroxy-3-methylbut-2-enyl diphosphate + 2 reduced [2Fe-2S]-[ferredoxin] + 2 H(+). The catalysed reaction is dimethylallyl diphosphate + 2 oxidized [2Fe-2S]-[ferredoxin] + H2O = (2E)-4-hydroxy-3-methylbut-2-enyl diphosphate + 2 reduced [2Fe-2S]-[ferredoxin] + 2 H(+). It participates in isoprenoid biosynthesis; dimethylallyl diphosphate biosynthesis; dimethylallyl diphosphate from (2E)-4-hydroxy-3-methylbutenyl diphosphate: step 1/1. Its pathway is isoprenoid biosynthesis; isopentenyl diphosphate biosynthesis via DXP pathway; isopentenyl diphosphate from 1-deoxy-D-xylulose 5-phosphate: step 6/6. Its function is as follows. Catalyzes the conversion of 1-hydroxy-2-methyl-2-(E)-butenyl 4-diphosphate (HMBPP) into a mixture of isopentenyl diphosphate (IPP) and dimethylallyl diphosphate (DMAPP). Acts in the terminal step of the DOXP/MEP pathway for isoprenoid precursor biosynthesis. The polypeptide is 4-hydroxy-3-methylbut-2-enyl diphosphate reductase (Haemophilus influenzae (strain 86-028NP)).